A 1072-amino-acid polypeptide reads, in one-letter code: DNA-directed RNA polymerase subunit beta (1072 aa).

The protein belongs to the RNA polymerase beta chain family. In plastids the minimal PEP RNA polymerase catalytic core is composed of four subunits: alpha, beta, beta', and beta''. When a (nuclear-encoded) sigma factor is associated with the core the holoenzyme is formed, which can initiate transcription.

The protein localises to the plastid. Its subcellular location is the chloroplast. The enzyme catalyses RNA(n) + a ribonucleoside 5'-triphosphate = RNA(n+1) + diphosphate. DNA-dependent RNA polymerase catalyzes the transcription of DNA into RNA using the four ribonucleoside triphosphates as substrates. This Draba nemorosa (Woodland whitlowgrass) protein is DNA-directed RNA polymerase subunit beta.